A 495-amino-acid chain; its full sequence is Glutamyl-tRNA(Gln) amidotransferase subunit A (495 aa).

Active-site charge relay system residues include K78 and S158. The Acyl-ester intermediate role is filled by S182.

This sequence belongs to the amidase family. GatA subfamily. In terms of assembly, heterotrimer of A, B and C subunits.

It carries out the reaction L-glutamyl-tRNA(Gln) + L-glutamine + ATP + H2O = L-glutaminyl-tRNA(Gln) + L-glutamate + ADP + phosphate + H(+). Allows the formation of correctly charged Gln-tRNA(Gln) through the transamidation of misacylated Glu-tRNA(Gln) in organisms which lack glutaminyl-tRNA synthetase. The reaction takes place in the presence of glutamine and ATP through an activated gamma-phospho-Glu-tRNA(Gln). The polypeptide is Glutamyl-tRNA(Gln) amidotransferase subunit A (Ruegeria sp. (strain TM1040) (Silicibacter sp.)).